Reading from the N-terminus, the 157-residue chain is UPF0225 protein PSPTO_4127 (157 aa).

Belongs to the UPF0225 family.

This is UPF0225 protein PSPTO_4127 from Pseudomonas syringae pv. tomato (strain ATCC BAA-871 / DC3000).